A 136-amino-acid polypeptide reads, in one-letter code: S-protein homolog 6 (136 aa).

Positions Met1–Thr17 are cleaved as a signal peptide. N-linked (GlcNAc...) asparagine glycosylation is found at Asn76 and Asn108.

It belongs to the plant self-incompatibility (S1) protein family.

Its subcellular location is the secreted. This chain is S-protein homolog 6, found in Arabidopsis thaliana (Mouse-ear cress).